The following is a 99-amino-acid chain: Plastocyanin (99 aa).

Positions 1–99 (VEVLLGASDG…AGMVGQVTVN (99 aa)) constitute a Plastocyanin-like domain. H37, C84, H87, and M92 together coordinate Cu cation.

The protein belongs to the plastocyanin family. Requires Cu(2+) as cofactor.

The protein localises to the plastid. The protein resides in the chloroplast thylakoid membrane. Functionally, participates in electron transfer between P700 and the cytochrome b6-f complex in photosystem I. In Vicia faba (Broad bean), this protein is Plastocyanin (PETE).